The primary structure comprises 301 residues: Glycine--tRNA ligase alpha subunit (301 aa).

Belongs to the class-II aminoacyl-tRNA synthetase family. Tetramer of two alpha and two beta subunits.

The protein localises to the cytoplasm. It carries out the reaction tRNA(Gly) + glycine + ATP = glycyl-tRNA(Gly) + AMP + diphosphate. This Shewanella oneidensis (strain ATCC 700550 / JCM 31522 / CIP 106686 / LMG 19005 / NCIMB 14063 / MR-1) protein is Glycine--tRNA ligase alpha subunit.